Here is a 101-residue protein sequence, read N- to C-terminus: MAKQSMKAREAKRAKLVAKFAEKRAALKVLISDVNASEEERWDAVLKLQALPRDSSASRQRNRCNQTGRPHGYLRKFGLSRIKVREACMKGEIPGLRKASW.

It belongs to the universal ribosomal protein uS14 family. Part of the 30S ribosomal subunit. Contacts proteins S3 and S10.

Binds 16S rRNA, required for the assembly of 30S particles and may also be responsible for determining the conformation of the 16S rRNA at the A site. In Aliivibrio fischeri (strain MJ11) (Vibrio fischeri), this protein is Small ribosomal subunit protein uS14.